We begin with the raw amino-acid sequence, 213 residues long: Pyrrolidone-carboxylate peptidase (213 aa).

Residues Glu80, Cys143, and His165 contribute to the active site.

This sequence belongs to the peptidase C15 family. In terms of assembly, homotetramer.

It localises to the cytoplasm. It carries out the reaction Release of an N-terminal pyroglutamyl group from a polypeptide, the second amino acid generally not being Pro.. Its function is as follows. Removes 5-oxoproline from various penultimate amino acid residues except L-proline. This Erwinia tasmaniensis (strain DSM 17950 / CFBP 7177 / CIP 109463 / NCPPB 4357 / Et1/99) protein is Pyrrolidone-carboxylate peptidase.